The sequence spans 236 residues: uncharacterized protein (236 aa).

The first 24 residues, 1-24 (MRKKHFNMILKLALISSLLALAAS), serve as a signal peptide directing secretion. Residues Asn59, Asn171, and Asn197 are each glycosylated (N-linked (GlcNAc...) asparagine).

The protein resides in the secreted. This is an uncharacterized protein from Caenorhabditis elegans.